The primary structure comprises 231 residues: Uridylate kinase (231 aa).

An ATP-binding site is contributed by 6–9 (KLSG). The interval 14–19 (GEGGRG) is involved in allosteric activation by GTP. Residues Gly49 and Arg53 each contribute to the ATP site. UMP is bound by residues Asp66 and 127–134 (TSNPFFTT). Positions 154, 160, and 163 each coordinate ATP.

Belongs to the UMP kinase family. Homohexamer.

It is found in the cytoplasm. It catalyses the reaction UMP + ATP = UDP + ADP. It functions in the pathway pyrimidine metabolism; CTP biosynthesis via de novo pathway; UDP from UMP (UMPK route): step 1/1. Its activity is regulated as follows. Allosterically activated by GTP. Inhibited by UTP. In terms of biological role, catalyzes the reversible phosphorylation of UMP to UDP. The polypeptide is Uridylate kinase (Thermotoga petrophila (strain ATCC BAA-488 / DSM 13995 / JCM 10881 / RKU-1)).